Here is a 603-residue protein sequence, read N- to C-terminus: Matrix metalloproteinase-17 (603 aa).

The first 35 residues, 1 to 35, serve as a signal peptide directing secretion; the sequence is MRRRAARGPGPPPPGPGLSRLPLPLLLLLALGTRG. A propeptide spanning residues 36-125 is cleaved from the precursor; sequence GCAAPAPAPR…PVLTQARRRR (90 aa). Positions 108–115 match the Cysteine switch motif; the sequence is PRCSLPDL. Position 110 (cysteine 110) interacts with Zn(2+). The N-linked (GlcNAc...) asparagine glycan is linked to asparagine 137. Histidine 248 serves as a coordination point for Zn(2+). Glutamate 249 is an active-site residue. Residues histidine 252 and histidine 258 each coordinate Zn(2+). A disordered region spans residues 301–329; the sequence is SPTAQPEEPPLLPEPPDNRSSAPPRKDVP. N-linked (GlcNAc...) asparagine glycosylation occurs at asparagine 318. A disulfide bond links cysteine 332 and cysteine 523. 4 Hemopexin repeats span residues 333–378, 382–427, 428–475, and 476–523; these read STHF…WRGL, LDSV…FSLP, PGGI…WRGV, and PSTL…WLVC. Residues 537–571 are disordered; the sequence is DAAEGPRAPPGQHDQSRSEDGYEVCSCTSGASSPP. Serine 565 is lipidated: GPI-anchor amidated serine. The propeptide at 566-603 is removed in mature form; the sequence is GASSPPGAPGPLVAATMLLLLPPLSPGALWTAAQALTL.

The protein belongs to the peptidase M10A family. Zn(2+) serves as cofactor. It depends on Ca(2+) as a cofactor. The precursor is cleaved by a furin endopeptidase. As to expression, expressed in brain, leukocytes, colon, ovary testis and breast cancer. Expressed also in many transformed and non-transformed cell types.

It localises to the cell membrane. It is found in the secreted. Its subcellular location is the extracellular space. The protein resides in the extracellular matrix. Functionally, endopeptidase that degrades various components of the extracellular matrix, such as fibrin. May be involved in the activation of membrane-bound precursors of growth factors or inflammatory mediators, such as tumor necrosis factor-alpha. May also be involved in tumoral process. Cleaves pro-TNF-alpha at the '74-Ala-|-Gln-75' site. Not obvious if able to proteolytically activate progelatinase A. Does not hydrolyze collagen types I, II, III, IV and V, gelatin, fibronectin, laminin, decorin nor alpha1-antitrypsin. The protein is Matrix metalloproteinase-17 (MMP17) of Homo sapiens (Human).